Consider the following 151-residue polypeptide: 3-hydroxyacyl-[acyl-carrier-protein] dehydratase FabZ (151 aa).

Histidine 54 is a catalytic residue.

It belongs to the thioester dehydratase family. FabZ subfamily.

It localises to the cytoplasm. The catalysed reaction is a (3R)-hydroxyacyl-[ACP] = a (2E)-enoyl-[ACP] + H2O. Involved in unsaturated fatty acids biosynthesis. Catalyzes the dehydration of short chain beta-hydroxyacyl-ACPs and long chain saturated and unsaturated beta-hydroxyacyl-ACPs. This chain is 3-hydroxyacyl-[acyl-carrier-protein] dehydratase FabZ, found in Klebsiella pneumoniae (strain 342).